Here is a 443-residue protein sequence, read N- to C-terminus: MTRKYFGTDGIRGTVGQAPITPDFVLRLAHAVGRVLKKSEARPTVLIGKDTRISGYMLESALESGFNSAGVDVVLLGPLPTPGVAYLTRAQRASLGVVISASHNPFADNGIKFFSAQGSKLPDVWEHDVEAALDEPPVWADSASLGKTRRLDDAAGRYIEFCKSTFANDLTLKGLKIVVDAAHGAAYQVAPKVFHELGAEVVAIGCSPDGLNINHEVGATHPQALIEAVKAHQADFGVALDGDADRLQLVDHAGRLYNGDELLYLLVDERLGRDEPVPGVVGTLMTNMAVEVALRARGVQFVRAKVGDRYVLEELEKHKWLLGGEGSGHLLALDKHTTGDGLISALQVLQACVRSGKKLAELLAEVTLFPQTLINVRLQPGQDWQVSANLASESRAVETELGAAGRLLIRASGTEPLVRVMVEARDAVQARACAERIANTLSV.

Catalysis depends on Ser102, which acts as the Phosphoserine intermediate. Mg(2+) is bound by residues Ser102, Asp241, Asp243, and Asp245. Position 102 is a phosphoserine (Ser102).

This sequence belongs to the phosphohexose mutase family. Mg(2+) is required as a cofactor. In terms of processing, activated by phosphorylation.

The enzyme catalyses alpha-D-glucosamine 1-phosphate = D-glucosamine 6-phosphate. Functionally, catalyzes the conversion of glucosamine-6-phosphate to glucosamine-1-phosphate. The sequence is that of Phosphoglucosamine mutase from Albidiferax ferrireducens (strain ATCC BAA-621 / DSM 15236 / T118) (Rhodoferax ferrireducens).